The sequence spans 370 residues: UDP-N-acetylglucosamine--N-acetylmuramyl-(pentapeptide) pyrophosphoryl-undecaprenol N-acetylglucosamine transferase (370 aa).

UDP-N-acetyl-alpha-D-glucosamine is bound by residues 15-17 (TGG), Asn126, Arg169, Ser197, and Gln299.

The protein belongs to the glycosyltransferase 28 family. MurG subfamily.

The protein localises to the cell inner membrane. The catalysed reaction is di-trans,octa-cis-undecaprenyl diphospho-N-acetyl-alpha-D-muramoyl-L-alanyl-D-glutamyl-meso-2,6-diaminopimeloyl-D-alanyl-D-alanine + UDP-N-acetyl-alpha-D-glucosamine = di-trans,octa-cis-undecaprenyl diphospho-[N-acetyl-alpha-D-glucosaminyl-(1-&gt;4)]-N-acetyl-alpha-D-muramoyl-L-alanyl-D-glutamyl-meso-2,6-diaminopimeloyl-D-alanyl-D-alanine + UDP + H(+). Its pathway is cell wall biogenesis; peptidoglycan biosynthesis. In terms of biological role, cell wall formation. Catalyzes the transfer of a GlcNAc subunit on undecaprenyl-pyrophosphoryl-MurNAc-pentapeptide (lipid intermediate I) to form undecaprenyl-pyrophosphoryl-MurNAc-(pentapeptide)GlcNAc (lipid intermediate II). This is UDP-N-acetylglucosamine--N-acetylmuramyl-(pentapeptide) pyrophosphoryl-undecaprenol N-acetylglucosamine transferase from Methylorubrum populi (strain ATCC BAA-705 / NCIMB 13946 / BJ001) (Methylobacterium populi).